Consider the following 398-residue polypeptide: Immunoglobulin heavy constant alpha 1 (398 aa).

The Extracellular segment spans residues 1-364 (ASPTSPKVFP…TPGANLWPTT (364 aa)). An Ig-like 1 domain is found at 6-98 (PKVFPLSLCS…HYTNPSQDVT (93 aa)). 2 disulfide bridges follow: C26/C85 and C77/C101. Positions 96-122 (DVTVPCPVPSTPPTPSPSTPPTPSPSC) are disordered. Pro residues predominate over residues 101-119 (CPVPSTPPTPSPSTPPTPS). O-linked (GalNAc...) serine glycosylation is present at S105. 2 O-linked (GalNAc...) threonine glycosylation sites follow: T106 and T109. Residues S111 and S113 are each glycosylated (O-linked (GalNAc...) serine). O-linked (GalNAc...) threonine glycans are attached at residues T114 and T117. 2 O-linked (GalNAc...) serine glycosylation sites follow: S119 and S121. Intrachain disulfides connect C123/C180, C147/C204, and C250/C313. 2 consecutive Ig-like domains span residues 125-220 (PRLS…ATLS) and 228-330 (PEVH…KTID). A glycan (N-linked (GlcNAc...) (complex) asparagine) is linked at N144. P340 carries N-linked (GlcNAc...) (complex) asparagine glycosylation. E352 is a 3-hydroxy-L-kynurenine binding site. The helical transmembrane segment at 365–383 (ITFLTLFLLSLFYSTALTV) threads the bilayer. At 384–398 (TSVRGPSGNREGPQY) the chain is on the cytoplasmic side.

In terms of assembly, immunoglobulins are composed of two identical heavy chains and two identical light chains; disulfide-linked. Monomeric or polymeric. Part of the secretory IgA (sIgA) complex that consists of two, four or five IgA monomers, and two additional non-Ig polypeptides, namely the JCHAIN and the secretory component (the proteolytic product of PIGR). Post-translationally, 3-Hydroxykynurenine, an oxidized tryptophan metabolite that is common in biological fluids, reacts with alpha-1-microglobulin to form heterogeneous polycyclic chromophores including hydroxanthommatin. The chromophore reacts with accessible cysteines forming non-reducible thioether cross-links with Ig alpha-1 chain C region Cys-352. In terms of processing, N- and O-glycosylated. N-glycan at Asn-144: Hex5HexNAc4.

It localises to the secreted. The protein resides in the cell membrane. In terms of biological role, constant region of immunoglobulin heavy chains. Immunoglobulins, also known as antibodies, are membrane-bound or secreted glycoproteins produced by B lymphocytes. In the recognition phase of humoral immunity, the membrane-bound immunoglobulins serve as receptors which, upon binding of a specific antigen, trigger the clonal expansion and differentiation of B lymphocytes into immunoglobulins-secreting plasma cells. Secreted immunoglobulins mediate the effector phase of humoral immunity, which results in the elimination of bound antigens. The antigen binding site is formed by the variable domain of one heavy chain, together with that of its associated light chain. Thus, each immunoglobulin has two antigen binding sites with remarkable affinity for a particular antigen. The variable domains are assembled by a process called V-(D)-J rearrangement and can then be subjected to somatic hypermutations which, after exposure to antigen and selection, allow affinity maturation for a particular antigen. Ig alpha is the major immunoglobulin class in body secretions. The chain is Immunoglobulin heavy constant alpha 1 from Homo sapiens (Human).